Here is a 45-residue protein sequence, read N- to C-terminus: Photosystem II reaction center protein K (45 aa).

Positions 1 to 8 (MNSALFLA) are excised as a propeptide. Residues 23-43 (ILPVIPVFFLLLAFVWQAAIG) traverse the membrane as a helical segment.

Belongs to the PsbK family. As to quaternary structure, PSII is composed of 1 copy each of membrane proteins PsbA, PsbB, PsbC, PsbD, PsbE, PsbF, PsbH, PsbI, PsbJ, PsbK, PsbL, PsbM, PsbT, PsbX, PsbY, PsbZ, Psb30/Ycf12, at least 3 peripheral proteins of the oxygen-evolving complex and a large number of cofactors. It forms dimeric complexes.

It is found in the plastid. It localises to the chloroplast thylakoid membrane. Functionally, one of the components of the core complex of photosystem II (PSII). PSII is a light-driven water:plastoquinone oxidoreductase that uses light energy to abstract electrons from H(2)O, generating O(2) and a proton gradient subsequently used for ATP formation. It consists of a core antenna complex that captures photons, and an electron transfer chain that converts photonic excitation into a charge separation. This is Photosystem II reaction center protein K from Pyropia yezoensis (Susabi-nori).